Consider the following 818-residue polypeptide: Adhesion G protein-coupled receptor E5 (818 aa).

Positions 1–23 (MRGVRCPGLLVVCILLSLSGAGT) are cleaved as a signal peptide. At 24–533 (QKAESKNCAK…VQDPRLELIT (510 aa)) the chain is on the extracellular side. One can recognise an EGF-like 1 domain in the interval 27–68 (ESKNCAKWCPINSKCVSNRSCVCKPGFSSEKELITNPAESCE). 12 cysteine pairs are disulfide-bonded: Cys-31/Cys-41, Cys-35/Cys-47, Cys-49/Cys-67, Cys-73/Cys-86, Cys-80/Cys-95, Cys-97/Cys-118, Cys-169/Cys-182, Cys-176/Cys-191, Cys-193/Cys-212, Cys-218/Cys-231, Cys-225/Cys-240, and Cys-242/Cys-260. A glycan (N-linked (GlcNAc...) asparagine) is linked at Asn-44. Positions 69 to 119 (DINECLLPGFSCGDFAMCKNSEGSYTCVCNLGYKLLSGAESFVNESENTCQ) constitute an EGF-like 2; calcium-binding domain. The N-linked (GlcNAc...) asparagine glycan is linked to Asn-112. In terms of domain architecture, EGF-like 3; calcium-binding spans 165–213 (DVNECISGQNHCHQSTHCINKLGGYSCICRQGWKPVPGSPNGPVSTVCE). Residues 214 to 261 (DVDECSSGQHQCHNSTVCKNTVGSYKCHCRPGWKPTSGSLRGPDTICQ) enclose the EGF-like 4; calcium-binding domain. N-linked (GlcNAc...) asparagine glycosylation is present at Asn-227. Asn-299 and Asn-395 each carry an N-linked (GlcNAc...) asparagine glycan. Positions 347–525 (PFTYTSPSNT…AILMAQYHVQ (179 aa)) constitute a GAIN-B domain. Ser-425 is modified (phosphoserine). N-linked (GlcNAc...) asparagine glycans are attached at residues Asn-461 and Asn-502. Cystine bridges form between Cys-482–Cys-507 and Cys-499–Cys-509. Residues 482 to 525 (CAFWKAHNGNGYWDTDGCSMNGTGFCHCNHLTSFAILMAQYHVQ) are GPS. The helical transmembrane segment at 534-554 (KVGLLLSLICLLLCILTFLLV) threads the bilayer. Topologically, residues 555–562 (KPIQSSRT) are cytoplasmic. A helical transmembrane segment spans residues 563 to 583 (MVHLHLCICLFLGSIIFLVGV). Residues 584–602 (ENEGGEVGLRCRLVAMMLH) are Extracellular-facing. A helical transmembrane segment spans residues 603 to 623 (FCFLAAFCWMALEGVELYFLV). Residues 624–637 (VRVFQGQGLSTWQR) lie on the Cytoplasmic side of the membrane. A helical transmembrane segment spans residues 638–658 (CLIGYGVPLLIVAISMAVVKM). The Extracellular portion of the chain corresponds to 659–679 (DGYGHATYCWLDFRKQGFLWS). Residues 680–700 (FSGPVAFIIFCNAAIFVITVW) traverse the membrane as a helical segment. Topologically, residues 701 to 723 (KLTKKFSEINPNMKKLRKARVLT) are cytoplasmic. The chain crosses the membrane as a helical span at residues 724 to 744 (ITAIAQLLVLGCTWGFGLFLF). Topologically, residues 745–752 (NPHSTWLS) are extracellular. A helical membrane pass occupies residues 753–773 (YIFTLLNCLQGLFLYVMLCLL). Topologically, residues 774–818 (NKKVREEYWKWACMVTGSKYTEFNSSTTGTGTSQTRALRSSESGM) are cytoplasmic. Phosphoserine is present on Ser-798. Low complexity predominate over residues 799–808 (STTGTGTSQT). The interval 799–818 (STTGTGTSQTRALRSSESGM) is disordered. The residue at position 808 (Thr-808) is a Phosphothreonine. Residues 809 to 818 (RALRSSESGM) show a composition bias toward polar residues. Residues Ser-814 and Ser-816 each carry the phosphoserine modification.

This sequence belongs to the G-protein coupled receptor 2 family. LN-TM7 subfamily. Forms a heterodimer, consisting of a large extracellular region (alpha subunit) non-covalently linked to a seven-transmembrane moiety (beta subunit). Interacts with complement decay-accelerating factor (DAF). The largest isoform (isoform 1) do not interact with DAF. Also interacts with chondroitin sulfate. In terms of processing, proteolytically cleaved into 2 subunits, an extracellular alpha subunit and a seven-transmembrane subunit. In terms of tissue distribution, although predominantly expressed by cells of the immune system, expressed ubiquitously with particularly high levels of expression in the lung and the thymus gland. In the spleen, expression is detected on most myeloid cells and variable portions of T-cells, B-cells and NK cells. In the bone marrow, expressed in nearly all myeloid cells, whereas little if any expression is found on erythroid cells.

Its subcellular location is the cell membrane. It localises to the secreted. It is found in the extracellular space. Receptor potentially involved in both adhesion and signaling processes early after leukocyte activation. Plays an essential role in leukocyte migration. This chain is Adhesion G protein-coupled receptor E5, found in Mus musculus (Mouse).